A 123-amino-acid chain; its full sequence is Large ribosomal subunit protein uL22c (123 aa).

Belongs to the universal ribosomal protein uL22 family. In terms of assembly, part of the 50S ribosomal subunit.

It localises to the plastid. The protein localises to the chloroplast. In terms of biological role, this protein binds specifically to 23S rRNA. Its function is as follows. The globular domain of the protein is located near the polypeptide exit tunnel on the outside of the subunit, while an extended beta-hairpin is found that lines the wall of the exit tunnel in the center of the 70S ribosome. The chain is Large ribosomal subunit protein uL22c (rpl22) from Illicium oligandrum (Star anise).